We begin with the raw amino-acid sequence, 396 residues long: Putative nickel insertion protein (396 aa).

The interval 333–355 (RSKLARESQTVETPDGPAKGKTV) is disordered.

This sequence belongs to the LarC family.

This is Putative nickel insertion protein from Rhodopirellula baltica (strain DSM 10527 / NCIMB 13988 / SH1).